The chain runs to 105 residues: Thioredoxin (105 aa).

The Thioredoxin domain maps to 2-105; it reads VKSVGNLADF…KLEETIKSLV (104 aa). Residues C32 and C35 each act as nucleophile in the active site. A disulfide bridge connects residues C32 and C35. S-nitrosocysteine occurs at positions 69 and 73.

It belongs to the thioredoxin family. In terms of processing, may be nitrosylated on several cysteine residues, depending on the oxidation state. Nitrosylated Cys-73 may serve as donor for nitrosylation of target proteins.

Its subcellular location is the nucleus. It localises to the cytoplasm. The protein localises to the secreted. Functionally, participates in various redox reactions through the reversible oxidation of its active center dithiol to a disulfide and catalyzes dithiol-disulfide exchange reactions. Plays a role in the reversible S-nitrosylation of cysteine residues in target proteins, and thereby contributes to the response to intracellular nitric oxide. Nitrosylates the active site Cys of CASP3 in response to nitric oxide (NO), and thereby inhibits caspase-3 activity. Induces the FOS/JUN AP-1 DNA binding activity in ionizing radiation (IR) cells through its oxidation/reduction status and stimulates AP-1 transcriptional activity. The chain is Thioredoxin (TXN) from Gallus gallus (Chicken).